A 488-amino-acid polypeptide reads, in one-letter code: Annexin A7 (488 aa).

Over residues 1-18 (MSYPGYPPTGYPPFPGYP) the composition is skewed to pro residues. 2 disordered regions span residues 1 to 49 (MSYP…YPQV) and 71 to 150 (GYPG…NTES). Residues 1 to 143 (MSYPGYPPTG…QYPGGQPTYP (143 aa)) are repeat-rich region. Positions 5 to 20 (GYPPTGYPPFPGYPPA) are 3 X 5 AA tandem repeats of G-Y-P-P-X. The span at 89-102 (PGQGFGVPPGGAGF) shows a compositional bias: gly residues. Annexin repeat units follow at residues 185-256 (FDAM…ALFM), 257-328 (PPTY…SMCQ), 340-412 (QMAQ…TILQ), and 416-487 (NRPA…AIVG). Lys233 bears the N6-acetyllysine mark.

It belongs to the annexin family. As to quaternary structure, interacts with PDCD6.

Calcium/phospholipid-binding protein which promotes membrane fusion and is involved in exocytosis. In Macaca fascicularis (Crab-eating macaque), this protein is Annexin A7 (ANXA7).